The following is a 231-amino-acid chain: ATP phosphoribosyltransferase (231 aa).

This sequence belongs to the ATP phosphoribosyltransferase family. Short subfamily. In terms of assembly, heteromultimer composed of HisG and HisZ subunits.

The protein resides in the cytoplasm. The enzyme catalyses 1-(5-phospho-beta-D-ribosyl)-ATP + diphosphate = 5-phospho-alpha-D-ribose 1-diphosphate + ATP. It participates in amino-acid biosynthesis; L-histidine biosynthesis; L-histidine from 5-phospho-alpha-D-ribose 1-diphosphate: step 1/9. In terms of biological role, catalyzes the condensation of ATP and 5-phosphoribose 1-diphosphate to form N'-(5'-phosphoribosyl)-ATP (PR-ATP). Has a crucial role in the pathway because the rate of histidine biosynthesis seems to be controlled primarily by regulation of HisG enzymatic activity. This chain is ATP phosphoribosyltransferase, found in Brucella melitensis biotype 2 (strain ATCC 23457).